The chain runs to 640 residues: Sodium-dependent nutrient amino acid transporter 1 (640 aa).

Residues Met1–Asn13 show a composition bias toward low complexity. Residues Met1 to Lys25 form a disordered region. The Cytoplasmic segment spans residues Met1–Asn30. Residues Glu16–Lys25 are compositionally biased toward basic and acidic residues. 3 helical membrane passes run Trp31–Val51, Gly64–Leu84, and Thr117–Val137. 3 N-linked (GlcNAc...) asparagine glycosylation sites follow: Asn174, Asn181, and Asn197. Transmembrane regions (helical) follow at residues Pro228 to Met248, Ala257 to Val277, Ala306 to Ser326, Ile340 to Leu360, Leu400 to Leu420, Cys447 to Val467, Thr473 to Leu493, Cys515 to Ile535, and Val551 to Tyr571.

It belongs to the sodium:neurotransmitter symporter (SNF) (TC 2.A.22) family.

The protein localises to the membrane. Functionally, unusual broad substrate spectrum amino acid:sodium cotransporter that promotes absorption of the D isomers of essential amino acids. Neutral amino acids are the preferred substrates, especially methionine and phenylalanine. The chain is Sodium-dependent nutrient amino acid transporter 1 from Drosophila ananassae (Fruit fly).